The chain runs to 150 residues: Large ribosomal subunit protein bL9 (150 aa).

This sequence belongs to the bacterial ribosomal protein bL9 family.

Functionally, binds to the 23S rRNA. The polypeptide is Large ribosomal subunit protein bL9 (Hamiltonella defensa subsp. Acyrthosiphon pisum (strain 5AT)).